Reading from the N-terminus, the 503-residue chain is Aminoaldehyde dehydrogenase 1, peroxisomal (503 aa).

Residues Asn27, Ile28, Asp99, and Leu189 each coordinate Na(+). 238-245 is a binding site for NAD(+); it reads GSSATGSK. Glu260 serves as the catalytic Proton acceptor. 2 residues coordinate NAD(+): Cys294 and Glu393. Residue Cys294 is the Nucleophile of the active site. The Microbody targeting signal signature appears at 501-503; it reads SKL.

Belongs to the aldehyde dehydrogenase family. Forms homodimers.

It is found in the peroxisome. The catalysed reaction is 3-aminopropanal + NAD(+) + H2O = beta-alanine + NADH + 2 H(+). The enzyme catalyses 4-aminobutanal + NAD(+) + H2O = 4-aminobutanoate + NADH + 2 H(+). It catalyses the reaction 4-guanidinobutanal + NAD(+) + H2O = 4-guanidinobutanoate + NADH + 2 H(+). It functions in the pathway amine and polyamine biosynthesis; betaine biosynthesis via choline pathway; betaine from betaine aldehyde: step 1/1. Functionally, dehydrogenase that catalyzes the oxidation of several aminoaldehydes. Metabolizes and detoxifies aldehyde products of polyamine degradation to non-toxic amino acids. Catalyzes the oxidation of 3-aminopropanal to beta-alanine. Catalyzes the oxidation of 4-aminobutanal to 4-aminobutanoate. Catalyzes the oxidation of 4-guanidinobutanal to 4-guanidinobutanoate. The chain is Aminoaldehyde dehydrogenase 1, peroxisomal from Pisum sativum (Garden pea).